A 349-amino-acid chain; its full sequence is N-acetyltaurine hydrolase (349 aa).

The a divalent metal cation site is built by H26, H28, E169, H201, H230, and D298.

Belongs to the metallo-dependent hydrolases superfamily. Phosphotriesterase family. The cofactor is a divalent metal cation.

It localises to the cytoplasm. Its subcellular location is the cytosol. It catalyses the reaction N-acetyltaurine + H2O = taurine + acetate. It carries out the reaction N-propanoyltaurine + H2O = propanoate + taurine. The catalysed reaction is N-acetyl-L-methionine + H2O = L-methionine + acetate. The enzyme catalyses N-acetyl-L-isoleucine + H2O = L-isoleucine + acetate. It catalyses the reaction N-acetyl-L-leucine + H2O = L-leucine + acetate. It carries out the reaction N-acetyl-L-valine + H2O = L-valine + acetate. In terms of biological role, N-acetyltaurine hydrolase that regulates feeding by catalyzing the hydrolysis of N-acetyltaurine into taurine and acetate. N-acetyltaurine has anorexigenic and anti-obesity effects that are dependent on GFRAL receptor and GDF15. PTER also acts on other N-acetyl amino acids (Met, Ile, Leu, Val) and N-propionyltaurine, but at lower rates. The polypeptide is N-acetyltaurine hydrolase (Homo sapiens (Human)).